The following is a 159-amino-acid chain: uncharacterized protein (159 aa).

Residues 4-24 traverse the membrane as a helical segment; it reads QIALILSLIILIFFIYKFAMF.

It localises to the membrane. This is an uncharacterized protein from Acheta domesticus (House cricket).